The sequence spans 197 residues: Non-structural protein 5 (197 aa).

Residues 17 to 30 (IFKNESSSTTSTLS) show a composition bias toward low complexity. The segment at 17–36 (IFKNESSSTTSTLSGKSIGR) is disordered. The residue at position 67 (Ser67) is a Phosphoserine; by host CK1. Position 92 (Asp92) interacts with Mg(2+). The disordered stretch occupies residues 131 to 167 (DHKKEKSKKDKSRKHYPRIEADSDSEDYVLDDSDSDD). The span at 152 to 165 (DSDSEDYVLDDSDS) shows a compositional bias: acidic residues. 4 positions are modified to phosphoserine; by host: Ser153, Ser155, Ser163, and Ser165.

This sequence belongs to the rotavirus NSP5 family. Homodimer. Interacts with VP1. Interacts with VP2. Interacts with NSP2; this interaction leads to up-regulation of NSP5 hyperphosphorylation and formation of virus factories. Interacts with NSP6. Participates in the selective exclusion of host proteins from stress granules (SG) and P bodies (PB). Also participates in the sequestration of these remodeled organelles in viral factories. Requires Mg(2+) as cofactor. In terms of processing, O-glycosylated. Hyperphosphorylated on serine residues, when in dimeric form. Phosphorylation by host CK1 is required for the hyperphosphorylation of NSP5 dimer.

Its subcellular location is the host cytoplasm. In terms of biological role, plays an essential role in the viral genome replication. Participates, together with NSP2, in the formation of viral factories (viroplasms), which are large inclusions in the host cytoplasm where replication intermediates are assembled and viral RNA replication takes place. Orchestrates the recruitment of viroplasmic proteins such as capsid proteins to these factories. Participates in the selective exclusion of host proteins from stress granules (SG) and P bodies (PB). Also participates in the sequestration of these remodeled organelles in viral factories. The polypeptide is Non-structural protein 5 (Homo sapiens (Human)).